The primary structure comprises 718 residues: Polyribonucleotide nucleotidyltransferase (718 aa).

Aspartate 506 and aspartate 512 together coordinate Mg(2+). A KH domain is found at 572–632 (PKLELFSVDP…EQIKAAKDYI (61 aa)). The 62-residue stretch at 657–718 (GQEFQGIVKK…NGKISVDLCE (62 aa)) folds into the S1 motif domain.

Belongs to the polyribonucleotide nucleotidyltransferase family. It depends on Mg(2+) as a cofactor.

It is found in the cytoplasm. It carries out the reaction RNA(n+1) + phosphate = RNA(n) + a ribonucleoside 5'-diphosphate. Involved in mRNA degradation. Catalyzes the phosphorolysis of single-stranded polyribonucleotides processively in the 3'- to 5'-direction. The chain is Polyribonucleotide nucleotidyltransferase from Campylobacter jejuni subsp. doylei (strain ATCC BAA-1458 / RM4099 / 269.97).